A 166-amino-acid polypeptide reads, in one-letter code: Co-chaperone protein HscB homolog (166 aa).

Residues 3–75 enclose the J domain; the sequence is QYFTLFRIEP…IDRAAYLLKT (73 aa).

The protein belongs to the HscB family. In terms of assembly, interacts with HscA and stimulates its ATPase activity.

In terms of biological role, co-chaperone involved in the maturation of iron-sulfur cluster-containing proteins. Seems to help targeting proteins to be folded toward HscA. This Neisseria meningitidis serogroup C (strain 053442) protein is Co-chaperone protein HscB homolog.